The sequence spans 232 residues: 7-cyano-7-deazaguanine synthase (232 aa).

Residue 8-18 coordinates ATP; it reads FSGGQDSTTCL. Zn(2+) contacts are provided by Cys-189, Cys-198, Cys-201, and Cys-204.

It belongs to the QueC family. Zn(2+) serves as cofactor.

The enzyme catalyses 7-carboxy-7-deazaguanine + NH4(+) + ATP = 7-cyano-7-deazaguanine + ADP + phosphate + H2O + H(+). The protein operates within purine metabolism; 7-cyano-7-deazaguanine biosynthesis. Functionally, catalyzes the ATP-dependent conversion of 7-carboxy-7-deazaguanine (CDG) to 7-cyano-7-deazaguanine (preQ(0)). In Yersinia enterocolitica serotype O:8 / biotype 1B (strain NCTC 13174 / 8081), this protein is 7-cyano-7-deazaguanine synthase.